We begin with the raw amino-acid sequence, 267 residues long: E3 SUMO-protein ligase MMS21 (267 aa).

Residues 169–256 form an SP-RING-type zinc finger; that stretch reads DEDDLQIEGG…IAKMKESQEQ (88 aa). Residues C200, H202, C221, and C226 each contribute to the Zn(2+) site.

The protein belongs to the NSE2 family. In terms of assembly, component of the Smc5-Smc6 complex which consists of KRE29, NSE1, NSE2/MMS21, NSE3, NSE4, NSE5, SMC5 and SMC6.

Its subcellular location is the nucleus. It localises to the cytoplasm. It participates in protein modification; protein sumoylation. Functionally, acts as an E3 ligase mediating SUMO/Smt3 attachment to SMC5 and YKU70. Acts in a DNA repair pathway for removal of UV-induced DNA damage that is distinct from classical nucleotide excision repair and in repair of ionizing radiation damage. Functions in homologous recombination repair of DNA double strand breaks and in recovery of stalled replication forks. The protein is E3 SUMO-protein ligase MMS21 (MMS21) of Saccharomyces cerevisiae (strain ATCC 204508 / S288c) (Baker's yeast).